Reading from the N-terminus, the 104-residue chain is Flagellar hook-basal body complex protein FliE (104 aa).

The protein belongs to the FliE family.

The protein resides in the bacterial flagellum basal body. The protein is Flagellar hook-basal body complex protein FliE of Salmonella agona (strain SL483).